The primary structure comprises 397 residues: MEGLQPVRSLFTRFFQLEAASGLLLIAAAVLALIINNSPLSYLYGGLLEVPVAVQVGALNIAKPLLLWINDGLMALFFLLIGLEVKREVVDGHLSKPSQVILPATAAVGGMVVPALIYWFINRDNPAAVAGWAIPTATDIAFALGVLALLGKRVPVSLKLFLMTLAIIDDLGAIIVIALFYSGTLSSVSLLLAAACLLVLVAMNRLGVIKLGPYMIVGLILWVCVLKSGVHATLAGVALAFCIPLRTRNAESSPLLALEHALHPWVAYAILPIFAFANAGVSLAGMTVDSFTHPVPMGITIGLLLGKTVGVFGLTWVAVKLRLAALPAGAGWGQILGVAILCGIGFTMSLFVGSLAFAPGSSEYAGMDRMGILTGSFFAAVIGYAVTAMASRKTSIA.

The next 12 helical transmembrane spans lie at 15 to 35 (FQLE…ALII), 42 to 62 (YLYG…LNIA), 65 to 85 (LLLW…GLEV), 101 to 121 (ILPA…YWFI), 129 to 149 (VAGW…VLAL), 160 to 180 (LFLM…IALF), 183 to 203 (GTLS…LVAM), 219 to 241 (LILW…ALAF), 265 to 285 (WVAY…SLAG), 299 to 319 (ITIG…WVAV), 335 to 355 (ILGV…VGSL), and 370 to 390 (MGIL…TAMA).

It belongs to the NhaA Na(+)/H(+) (TC 2.A.33) antiporter family.

It is found in the cell inner membrane. It carries out the reaction Na(+)(in) + 2 H(+)(out) = Na(+)(out) + 2 H(+)(in). Na(+)/H(+) antiporter that extrudes sodium in exchange for external protons. In Pseudomonas putida (strain ATCC 47054 / DSM 6125 / CFBP 8728 / NCIMB 11950 / KT2440), this protein is Na(+)/H(+) antiporter NhaA 1.